The following is a 549-amino-acid chain: Cation/acetate symporter ActP (549 aa).

The Periplasmic portion of the chain corresponds to 1–32 (MKRVLTALAAALPFAAHAADAISGAVERQPTN). A helical transmembrane segment spans residues 33–55 (WQAIIMFLIFVVFTLGITYWASK). Residues 56–75 (RVRSRSDYYTAGGNITGFQN) lie on the Cytoplasmic side of the membrane. The chain crosses the membrane as a helical span at residues 76-98 (GLAIAGDYMSAASFLGISALVFT). The Periplasmic portion of the chain corresponds to 99–102 (SGYD). Residues 103–125 (GLIYSLGFLVGWPIILFLIAERL) traverse the membrane as a helical segment. At 126–145 (RNLGRYTFADVASYRLKQGP) the chain is on the cytoplasmic side. Residues 146–168 (IRILSACGSLVVVALYLIAQMVG) form a helical membrane-spanning segment. The Periplasmic segment spans residues 169-182 (AGKLIELLFGLNYH). The helical transmembrane segment at 183-205 (IAVVLVGVLMMMYVLFGGMLATT) threads the bilayer. The Cytoplasmic segment spans residues 206 to 211 (WVQIIK). A helical transmembrane segment spans residues 212-234 (AVLLLFGASFMAFMVMKHVGFSF). Residues 235–260 (NNLFTEAMAVHPKGTAIMSPGGLVQD) are Periplasmic-facing. Residues 261 to 283 (PISALSLGLGLIFGTAGLPHILM) traverse the membrane as a helical segment. The Cytoplasmic segment spans residues 284–302 (RFFTVSDAREARKSVFYAT). Residues 303–325 (GFMGYFYILTFIIGFGAIMLVGA) traverse the membrane as a helical segment. Topologically, residues 326–361 (NPAYKDAAGALIGGNNMAAVHLANAVGGNLFLGFIS) are periplasmic. The chain crosses the membrane as a helical span at residues 362–384 (AVAFATILAVVAGLTLAGASAVS). Topologically, residues 385–403 (HDLYANVFRKGATEREELK) are cytoplasmic. Residues 404 to 423 (VSKITVLVLDVIAIILGVLF) traverse the membrane as a helical segment. The Periplasmic segment spans residues 424–427 (ENQN). The chain crosses the membrane as a helical span at residues 428–450 (IAFMVGLAFAIAASCNFPIILLS). The Cytoplasmic portion of the chain corresponds to 451-461 (MYWSKLTTRGA). A helical transmembrane segment spans residues 462–484 (MLGGWLGLLTAVVLMILGPTIWV). The Periplasmic segment spans residues 485–493 (QILGHEKAI). The helical transmembrane segment at 494-516 (FPYEYPALFSISVAFLGIWFFSA) threads the bilayer. Over 517 to 549 (TDNSAEGNREREQFRAQFIRSQTGFGVQQGRAH) the chain is Cytoplasmic.

This sequence belongs to the sodium:solute symporter (SSF) (TC 2.A.21) family.

The protein localises to the cell inner membrane. In terms of biological role, transports acetate. The protein is Cation/acetate symporter ActP (actP) of Salmonella typhi.